Reading from the N-terminus, the 79-residue chain is RNA-binding protein Hfq (79 aa).

The Sm domain occupies 10 to 70 (DAFLNHVRKT…ISTIMPAQPI (61 aa)).

This sequence belongs to the Hfq family. In terms of assembly, homohexamer.

Functionally, RNA chaperone that binds small regulatory RNA (sRNAs) and mRNAs to facilitate mRNA translational regulation in response to envelope stress, environmental stress and changes in metabolite concentrations. Also binds with high specificity to tRNAs. This Ruegeria pomeroyi (strain ATCC 700808 / DSM 15171 / DSS-3) (Silicibacter pomeroyi) protein is RNA-binding protein Hfq.